The chain runs to 95 residues: Lipolysis-activating peptide 1-beta chain (95 aa).

Positions 1–22 (MISVQVIFIAFISIIAFSMVCG) are cleaved as a signal peptide. In terms of domain architecture, LCN-type CS-alpha/beta spans 23–91 (GNVFPNRELG…FLNALEKQCP (69 aa)). Intrachain disulfides connect C37-C60, C45-C70, and C49-C72.

Homodimer; disulfide-linked or monomer (edited version) or heterodimer of an alpha chain (AC P84810) and this beta chain (non-edited version). Expressed by the venom gland.

The protein localises to the secreted. The homodimer inhibits HMG-CoA reductase (HMGCR) (32% of inhibition produced by 0.6 uM), a glycoprotein involved in the control of cholesterol biosynthesis. The inhibitory effects of bumarsin are seen at much lower concentrations (0.6 uM) than that for statins such as atorvastatin (5 mM) and simvastatin (10 uM). In addition to inhibition of HMG-CoA reductase, this protein lowers cholesterol levels by inducing steroid hormone synthesis via StAR, and by increasing reverse cholesterol transport mediated by the induction of ABCA1 and APOA1. Functionally, the heterodimer non-edited LVP1 induces lipolysis in rat adipocytes. Induction of lipolysis by LVP1 appears to be mediated through the beta-2 adrenergic receptor pathway (ADRB2). Intracerebroventricular injection is not toxic to mice. In terms of biological role, the monomer edited version, similar to alpha-toxins, may modulate voltage-gated sodium channels (Nav) and may block voltage-gated potassium channels (Kv). The polypeptide is Lipolysis-activating peptide 1-beta chain (Buthus occitanus tunetanus (Common European scorpion)).